The primary structure comprises 437 residues: Doublesex- and mab-3-related transcription factor A2 (437 aa).

The segment at residues 49–96 (CARCRNHGVVSALKGHKRYCRWKDCMCAKCTLIAERQRVMAAQVALRR) is a DNA-binding region (DM). Disordered regions lie at residues 163–254 (SVTP…ARQR) and 297–317 (DKSE…PSVS). Composition is skewed to low complexity over residues 179-201 (SESV…SGSE) and 223-235 (SPSS…SESG). One can recognise a DMA domain in the interval 254 to 289 (RTPIDILTRVFPAQKRSVLELVLQGCGGDVVQAIEQ).

Belongs to the DMRT family.

The protein resides in the nucleus. In terms of biological role, may be involved in sexual development. The polypeptide is Doublesex- and mab-3-related transcription factor A2 (dmrta2) (Xenopus tropicalis (Western clawed frog)).